The sequence spans 547 residues: uncharacterized protein (547 aa).

The span at 38–50 (RNLPFHREREKVE) shows a compositional bias: basic and acidic residues. The disordered stretch occupies residues 38-89 (RNLPFHREREKVESNPNSSDEEDLTSTNNTRSSDNTTSDTEDDSGEDSYQVE). The segment covering 62–75 (TSTNNTRSSDNTTS) has biased composition (low complexity). 12 helical membrane-spanning segments follow: residues 108-128 (IYTL…SSIF), 148-168 (LCSA…APLS), 174-194 (LPLY…GGCS), 197-217 (IWSL…PMSA), 233-253 (GALL…PVMG), 265-285 (WDFW…CFTM), 346-366 (MYLV…PLIF), 377-397 (GLAI…TPII), 418-438 (LFPL…LGWT), 445-465 (WAAP…VLAV), 478-500 (AASA…TIVA), and 514-534 (SLLA…FFWG).

The protein belongs to the major facilitator superfamily. CAR1 family.

The protein localises to the membrane. This is an uncharacterized protein from Schizosaccharomyces pombe (strain 972 / ATCC 24843) (Fission yeast).